The following is a 662-amino-acid chain: MESPTHPKPSKDKTLSWNLVFLVGILFTIDIGMANPSPHQVYNVTWTITNLVTGTKANATSMLGTLTDAFPTMYFDLCDIIGNTWNPSDQEPFPGYGCDQPMRRWQQRNTPFYVCPGHANRKQCGGPQDGFCAVWGCETTGETYWRPTSSWDYITVKKGVTQGIYQCSGGGWCGPCYDKAVHSSTTGASEGGRCNPLILQFTQKGRQTSWDGPKSWGLRLYRSGYDPIALFSVSRQVMTITPPQAMGPNLVLPDQKPPSRQSQIESRVTPHHSQGNGGTPGITLVNASIAPLSTPVTPASPKRIGTGDRLINLVQGTYLALNATDPNRTKDCWLCLVSRPPYYEGIAILGNYSNQTNPPPSCLSIPQHKLTISEVSGQGLCIGTVPKTHQALCNETQQGHTGAHYLAAPNGTYWACNTGLTPCISMAVLNWTSDFCVLIELWPRVTYHQPEYVYTHFAKAARFRREPISLTVALMLGGLTVGGIAAGVGTGTKALIETAQFRQLQMAMHTDIQALEESISALEKSLTSLSEVVLQNRRGLDILFLQEGGLCAALKEECCFYADHTGLVRDNMAKLRERLKQRQQLFDSQQGWFEGWFNKSPWFTTLISSIMGPLLILLLILLFGPCILNRLVQFVKDRISVVQALILTQQYQQIKQYDPDRP.

Positions 1–34 are cleaved as a signal peptide; that stretch reads MESPTHPKPSKDKTLSWNLVFLVGILFTIDIGMA. Over 35 to 606 the chain is Extracellular; sequence NPSPHQVYNV…FNKSPWFTTL (572 aa). 2 N-linked (GlcNAc...) asparagine; by host glycosylation sites follow: Asn-43 and Asn-58. Cystine bridges form between Cys-115/Cys-132 and Cys-124/Cys-137. The disordered stretch occupies residues 245–279; the sequence is AMGPNLVLPDQKPPSRQSQIESRVTPHHSQGNGGT. Residues 258–274 show a composition bias toward polar residues; the sequence is PSRQSQIESRVTPHHSQ. Asn-286, Asn-322, and Asn-327 each carry an N-linked (GlcNAc...) asparagine; by host glycan. Intrachain disulfides connect Cys-332-Cys-335, Cys-332-Cys-559, and Cys-551-Cys-558. Residues 332–335 carry the CXXC motif; the sequence is CWLC. Residues Asn-351, Asn-354, Asn-394, Asn-410, and Asn-430 are each glycosylated (N-linked (GlcNAc...) asparagine; by host). Positions 468–488 are fusion peptide; that stretch reads ISLTVALMLGGLTVGGIAAGV. Coiled-coil stretches lie at residues 496–545 and 555–591; these read IETA…ILFL and KEEC…SQQG. An immunosuppression region spans residues 534–550; sequence LQNRRGLDILFLQEGGL. Positions 551–559 match the CX6CC motif; it reads CAALKEECC. The helical transmembrane segment at 607 to 627 threads the bilayer; that stretch reads ISSIMGPLLILLLILLFGPCI. Cys-626 carries the S-palmitoyl cysteine; by host lipid modification. The Cytoplasmic portion of the chain corresponds to 628-662; it reads LNRLVQFVKDRISVVQALILTQQYQQIKQYDPDRP.

In terms of assembly, the mature envelope protein (Env) consists of a trimer of SU-TM heterodimers attached by a labile interchain disulfide bond. In terms of processing, specific enzymatic cleavages in vivo yield mature proteins. Envelope glycoproteins are synthesized as an inactive precursor that is N-glycosylated and processed likely by host cell furin or by a furin-like protease in the Golgi to yield the mature SU and TM proteins. The cleavage site between SU and TM requires the minimal sequence [KR]-X-[KR]-R. The R-peptide is released from the C-terminus of the cytoplasmic tail of the TM protein upon particle formation as a result of proteolytic cleavage by the viral protease. Cleavage of this peptide is required for TM to become fusogenic. The CXXC motif is highly conserved across a broad range of retroviral envelope proteins. It is thought to participate in the formation of a labile disulfide bond possibly with the CX6CC motif present in the transmembrane protein. Isomerization of the intersubunit disulfide bond to an SU intrachain disulfide bond is thought to occur upon receptor recognition in order to allow membrane fusion. Post-translationally, the transmembrane protein is palmitoylated. In terms of processing, the R-peptide is palmitoylated.

The protein resides in the virion membrane. The protein localises to the host cell membrane. In terms of biological role, the surface protein (SU) attaches the virus to the host cell by binding to its receptor. This interaction triggers the refolding of the transmembrane protein (TM) and is thought to activate its fusogenic potential by unmasking its fusion peptide. Fusion occurs at the host cell plasma membrane. Its function is as follows. The transmembrane protein (TM) acts as a class I viral fusion protein. Under the current model, the protein has at least 3 conformational states: pre-fusion native state, pre-hairpin intermediate state, and post-fusion hairpin state. During viral and target cell membrane fusion, the coiled coil regions (heptad repeats) assume a trimer-of-hairpins structure, positioning the fusion peptide in close proximity to the C-terminal region of the ectodomain. The formation of this structure appears to drive apposition and subsequent fusion of viral and target cell membranes. Membranes fusion leads to delivery of the nucleocapsid into the cytoplasm. The protein is Envelope glycoprotein (env) of Felidae (cat family).